We begin with the raw amino-acid sequence, 450 residues long: Saccharopine dehydrogenase [NADP(+), L-glutamate-forming] (450 aa).

NADP(+) is bound by residues serine 11 to valine 14, cysteine 33 to threonine 35, aspartate 55 to valine 56, isoleucine 76, threonine 98 to serine 99, leucine 125 to proline 127, and serine 175. Residues serine 99 to tyrosine 100 and aspartate 126 contribute to the L-saccharopine site. L-saccharopine-binding positions include arginine 224 and threonine 245 to arginine 247.

It belongs to the saccharopine dehydrogenase family. As to quaternary structure, homodimer.

It catalyses the reaction L-saccharopine + NADP(+) + H2O = (S)-2-amino-6-oxohexanoate + L-glutamate + NADPH + H(+). The protein operates within amino-acid biosynthesis; L-lysine biosynthesis via AAA pathway; L-lysine from L-alpha-aminoadipate (fungal route): step 2/3. The chain is Saccharopine dehydrogenase [NADP(+), L-glutamate-forming] (LYS3) from Pyricularia oryzae (strain 70-15 / ATCC MYA-4617 / FGSC 8958) (Rice blast fungus).